The sequence spans 95 residues: Large ribosomal subunit protein uL23 (95 aa).

Belongs to the universal ribosomal protein uL23 family. Part of the 50S ribosomal subunit. Contacts protein L29, and trigger factor when it is bound to the ribosome.

Its function is as follows. One of the early assembly proteins it binds 23S rRNA. One of the proteins that surrounds the polypeptide exit tunnel on the outside of the ribosome. Forms the main docking site for trigger factor binding to the ribosome. This chain is Large ribosomal subunit protein uL23, found in Solibacter usitatus (strain Ellin6076).